The primary structure comprises 293 residues: MASYTMKLSTYIEMWSQYETGLSMAEKIEKGRPKLFDFQYPIFDESYRKVFETHFIRNFYMREIGFETEGLFKFNLETWLIINMPYFNKLFESELIKYDPLENTRLNTTGNKKNDTERNDNRDTTGSMKADGKSNTKTSDKTNATGSSKEDGKTTGSVTDDNFNRKIDSDQPDSRLNLTTNDGQGTLEYASAIEENNTNNKRNTTGTNNVTSSAESESTGSGTSDTVTTDNANTTTNDKLNSQINNVEDYIESKIGKSGTQSYASLVQDYRAALLRIEKRIFDEMQELFMLVY.

Residues 104 to 240 (TRLNTTGNKK…NANTTTNDKL (137 aa)) form a disordered region. Composition is skewed to basic and acidic residues over residues 112 to 123 (KKNDTERNDNRD), 130 to 140 (ADGKSNTKTSD), and 162 to 173 (NFNRKIDSDQPD). A compositionally biased stretch (polar residues) spans 174-184 (SRLNLTTNDGQ). A compositionally biased stretch (low complexity) spans 196-238 (NNTNNKRNTTGTNNVTSSAESESTGSGTSDTVTTDNANTTTND).

The protein belongs to the phi29likevirus proximal tail tube connector protein family.

It is found in the virion. In terms of biological role, forms the proximal part of the tail tube. The sequence is that of Proximal tail tube connector protein (11) from Bacillus subtilis (Bacteriophage B103).